We begin with the raw amino-acid sequence, 170 residues long: Adenine phosphoribosyltransferase (170 aa).

The protein belongs to the purine/pyrimidine phosphoribosyltransferase family. As to quaternary structure, homodimer.

It is found in the cytoplasm. It catalyses the reaction AMP + diphosphate = 5-phospho-alpha-D-ribose 1-diphosphate + adenine. Its pathway is purine metabolism; AMP biosynthesis via salvage pathway; AMP from adenine: step 1/1. Catalyzes a salvage reaction resulting in the formation of AMP, that is energically less costly than de novo synthesis. The protein is Adenine phosphoribosyltransferase of Thermotoga neapolitana (strain ATCC 49049 / DSM 4359 / NBRC 107923 / NS-E).